The sequence spans 695 residues: Probable serine/threonine-protein kinase DDB_G0279405 (695 aa).

Disordered regions lie at residues Ile-119–Gln-138 and Gln-149–Lys-192. Over residues Gln-124–Gln-138 the composition is skewed to pro residues. A compositionally biased stretch (low complexity) spans Gln-149 to Gln-160. Residues Phe-161–Gly-173 are compositionally biased toward polar residues. A Protein kinase domain is found at Tyr-201 to Thr-462. ATP is bound by residues Leu-207–Val-215 and Lys-230. Catalysis depends on Asp-329, which acts as the Proton acceptor. Positions Thr-491 to Ser-580 are disordered. Residues Leu-510 to Ser-528 show a composition bias toward low complexity. Positions Lys-529–Ile-541 are enriched in polar residues. Low complexity predominate over residues Gln-542–Ser-580.

The protein belongs to the protein kinase superfamily. Ser/Thr protein kinase family.

It carries out the reaction L-seryl-[protein] + ATP = O-phospho-L-seryl-[protein] + ADP + H(+). The enzyme catalyses L-threonyl-[protein] + ATP = O-phospho-L-threonyl-[protein] + ADP + H(+). This Dictyostelium discoideum (Social amoeba) protein is Probable serine/threonine-protein kinase DDB_G0279405.